The sequence spans 153 residues: Large ribosomal subunit protein uL22 (153 aa).

This sequence belongs to the universal ribosomal protein uL22 family. In terms of assembly, part of the 50S ribosomal subunit.

Functionally, this protein binds specifically to 23S rRNA. It makes multiple contacts with different domains of the 23S rRNA in the assembled 50S subunit and ribosome. In terms of biological role, the globular domain of the protein is located near the polypeptide exit tunnel on the outside of the subunit, while an extended beta-hairpin is found that lines the wall of the exit tunnel in the center of the 70S ribosome. The chain is Large ribosomal subunit protein uL22 from Methanocella arvoryzae (strain DSM 22066 / NBRC 105507 / MRE50).